The primary structure comprises 1723 residues: Probable outer membrane protein pmp20 (1723 aa).

The N-terminal stretch at 1-21 (MKWLPATAVFAAVLPALTAFG) is a signal peptide. Disordered stretches follow at residues 78–100 (VTPD…SGAT) and 139–161 (LSSS…SASA). Composition is skewed to low complexity over residues 85 to 100 (SSSN…SGAT) and 140 to 161 (SSSS…SASA). An Autotransporter domain is found at 1434–1723 (EDPAFNNFWA…MANGGIRFVF (290 aa)).

It belongs to the PMP outer membrane protein family.

The protein resides in the secreted. The protein localises to the cell wall. It is found in the cell outer membrane. This chain is Probable outer membrane protein pmp20 (pmp20), found in Chlamydia pneumoniae (Chlamydophila pneumoniae).